Here is a 486-residue protein sequence, read N- to C-terminus: Ribulose bisphosphate carboxylase large chain (486 aa).

Asn126 and Thr176 together coordinate substrate. Lys178 functions as the Proton acceptor in the catalytic mechanism. Lys180 is a substrate binding site. Positions 204, 206, and 207 each coordinate Mg(2+). Lys204 bears the N6-carboxylysine mark. The Proton acceptor role is filled by His296. The substrate site is built by Arg297, His329, and Ser381.

This sequence belongs to the RuBisCO large chain family. Type I subfamily. In terms of assembly, heterohexadecamer of 8 large chains and 8 small chains. Requires Mg(2+) as cofactor.

The enzyme catalyses 2 (2R)-3-phosphoglycerate + 2 H(+) = D-ribulose 1,5-bisphosphate + CO2 + H2O. It carries out the reaction D-ribulose 1,5-bisphosphate + O2 = 2-phosphoglycolate + (2R)-3-phosphoglycerate + 2 H(+). In terms of biological role, ruBisCO catalyzes two reactions: the carboxylation of D-ribulose 1,5-bisphosphate, the primary event in carbon dioxide fixation, as well as the oxidative fragmentation of the pentose substrate. Both reactions occur simultaneously and in competition at the same active site. In Cupriavidus taiwanensis (strain DSM 17343 / BCRC 17206 / CCUG 44338 / CIP 107171 / LMG 19424 / R1) (Ralstonia taiwanensis (strain LMG 19424)), this protein is Ribulose bisphosphate carboxylase large chain.